Here is a 121-residue protein sequence, read N- to C-terminus: MADNKKSMSRAISEDSNLYNKISGTKRAYSDLHHSNSSIYSAKSFGSSVTIYCAVGNDQQTALVNQNDQFYKNQFMIRASSYPTLVSPVSTENQLSQQLRPHISEAAEVLHQYIAKRSRKN.

This is an uncharacterized protein from Microplitis demolitor (Parasitoid wasp).